Reading from the N-terminus, the 426-residue chain is Phosphoribosylamine--glycine ligase (426 aa).

The region spanning 113-320 is the ATP-grasp domain; sequence KSLMTEAKIP…LLELLYRAST (208 aa). Residue 139-200 participates in ATP binding; the sequence is LESKSIPIVI…EEFMEGQEAS (62 aa). Glu290 and Asn292 together coordinate Mg(2+).

The protein belongs to the GARS family. It depends on Mg(2+) as a cofactor. The cofactor is Mn(2+).

The catalysed reaction is 5-phospho-beta-D-ribosylamine + glycine + ATP = N(1)-(5-phospho-beta-D-ribosyl)glycinamide + ADP + phosphate + H(+). It participates in purine metabolism; IMP biosynthesis via de novo pathway; N(1)-(5-phospho-D-ribosyl)glycinamide from 5-phospho-alpha-D-ribose 1-diphosphate: step 2/2. In Leptospira interrogans serogroup Icterohaemorrhagiae serovar copenhageni (strain Fiocruz L1-130), this protein is Phosphoribosylamine--glycine ligase.